The primary structure comprises 512 residues: MSEQTTTPEVDHTLELNNEMTERRSKLAALRAQGNPFPNDFRRDSLSGDLHAEFGDKSAEELVALGKQVKIAGRIMTRRIMGKASFATLQDMAGKIQIYVTRDDLPEGFYNEQFKKWDLGDIVGVEGTLFRTNTGELSVHVSTIRLLTKALRPLPEKHKGLTDQEARCRQRYLDLIANEESRKTFMIRTKVVAGIRKFFNDKRFMEVETPMMQVIPGGASARPFVTHHNALDIDMYLRIAPELYLKRLVVGGFERVYEINRNFRNEGISVRHNPEFTMIEFYMAYADYIDLMDLTEELLRTLAQDILGDTKIRYAKEGEEGLTIDFGQPFQRLTMVDSILKFNPDVTPADLATLESAKAVAKHLHIELMKGWELGHVITAIFEETVEHMLLQPTFITEYPAAVSPLARRNDVNPDVTDRFEFFIGGRELANGFSELNDAEDQAKRFQDQVNQKEAGDDEAMFYDADFVTALEHGLPPTAGQGIGIDRLVMLFTNSHTIRDVILFPALRPQQK.

The Mg(2+) site is built by glutamate 421 and glutamate 428.

The protein belongs to the class-II aminoacyl-tRNA synthetase family. Homodimer. Mg(2+) serves as cofactor.

It is found in the cytoplasm. It catalyses the reaction tRNA(Lys) + L-lysine + ATP = L-lysyl-tRNA(Lys) + AMP + diphosphate. This Aeromonas salmonicida (strain A449) protein is Lysine--tRNA ligase.